We begin with the raw amino-acid sequence, 211 residues long: 2,3-bisphosphoglycerate-dependent phosphoglycerate mutase (211 aa).

Residues 9-16 (RHGQSDWN), 22-23 (TG), R61, 88-91 (ERDY), K99, 115-116 (RR), and 159-160 (GN) each bind substrate. H10 acts as the Tele-phosphohistidine intermediate in catalysis. The active-site Proton donor/acceptor is the E88.

The protein belongs to the phosphoglycerate mutase family. BPG-dependent PGAM subfamily. Homodimer.

It carries out the reaction (2R)-2-phosphoglycerate = (2R)-3-phosphoglycerate. The protein operates within carbohydrate degradation; glycolysis; pyruvate from D-glyceraldehyde 3-phosphate: step 3/5. Functionally, catalyzes the interconversion of 2-phosphoglycerate and 3-phosphoglycerate. The chain is 2,3-bisphosphoglycerate-dependent phosphoglycerate mutase from Rhizobium meliloti (strain 1021) (Ensifer meliloti).